The primary structure comprises 151 residues: UPF0735 ACT domain-containing protein SSP1116 (151 aa).

The ACT domain maps to 74–149 (TLILYVNDIV…HVSKVELISM (76 aa)).

The protein belongs to the UPF0735 family.

The chain is UPF0735 ACT domain-containing protein SSP1116 from Staphylococcus saprophyticus subsp. saprophyticus (strain ATCC 15305 / DSM 20229 / NCIMB 8711 / NCTC 7292 / S-41).